The primary structure comprises 339 residues: NADH-quinone oxidoreductase subunit H (339 aa).

Helical transmembrane passes span 10–30 (FPLTVIALKVVAITIPLILCV), 50–70 (PNVVGPFGLLQPIADAVKLLF), 82–102 (ILFILAPIITFVLSLIGWAVI), 115–135 (VGVLYILAISSLSVYGIIIAG), 161–181 (MGLVIITVLLTTGTLNLSGII), 187–207 (LPWWIDLMLLPMSIVFFISVL), 235–255 (MGFALFFLGEYANMILVSAMT), 275–295 (IPGFFWFVFKVGFLLFCFLWI), and 311–331 (GWKVFLPFTLFGVVLVSSVLF).

Belongs to the complex I subunit 1 family. In terms of assembly, NDH-1 is composed of 14 different subunits. Subunits NuoA, H, J, K, L, M, N constitute the membrane sector of the complex.

It is found in the cell inner membrane. The catalysed reaction is a quinone + NADH + 5 H(+)(in) = a quinol + NAD(+) + 4 H(+)(out). In terms of biological role, NDH-1 shuttles electrons from NADH, via FMN and iron-sulfur (Fe-S) centers, to quinones in the respiratory chain. The immediate electron acceptor for the enzyme in this species is believed to be ubiquinone. Couples the redox reaction to proton translocation (for every two electrons transferred, four hydrogen ions are translocated across the cytoplasmic membrane), and thus conserves the redox energy in a proton gradient. This subunit may bind ubiquinone. The chain is NADH-quinone oxidoreductase subunit H from Rickettsia prowazekii (strain Madrid E).